Reading from the N-terminus, the 496-residue chain is Probable cytosol aminopeptidase (496 aa).

Mn(2+) is bound by residues Lys266 and Asp271. Residue Lys278 is part of the active site. Residues Asp289, Asp348, and Glu350 each contribute to the Mn(2+) site. Arg352 is a catalytic residue.

The protein belongs to the peptidase M17 family. Mn(2+) serves as cofactor.

Its subcellular location is the cytoplasm. It catalyses the reaction Release of an N-terminal amino acid, Xaa-|-Yaa-, in which Xaa is preferably Leu, but may be other amino acids including Pro although not Arg or Lys, and Yaa may be Pro. Amino acid amides and methyl esters are also readily hydrolyzed, but rates on arylamides are exceedingly low.. The enzyme catalyses Release of an N-terminal amino acid, preferentially leucine, but not glutamic or aspartic acids.. Its function is as follows. Presumably involved in the processing and regular turnover of intracellular proteins. Catalyzes the removal of unsubstituted N-terminal amino acids from various peptides. The protein is Probable cytosol aminopeptidase of Stutzerimonas stutzeri (strain A1501) (Pseudomonas stutzeri).